The following is a 310-amino-acid chain: Pantothenate kinase (310 aa).

95 to 102 (GSVAVGKS) is a binding site for ATP.

This sequence belongs to the prokaryotic pantothenate kinase family.

It localises to the cytoplasm. The enzyme catalyses (R)-pantothenate + ATP = (R)-4'-phosphopantothenate + ADP + H(+). The protein operates within cofactor biosynthesis; coenzyme A biosynthesis; CoA from (R)-pantothenate: step 1/5. In Mycobacteroides abscessus (strain ATCC 19977 / DSM 44196 / CCUG 20993 / CIP 104536 / JCM 13569 / NCTC 13031 / TMC 1543 / L948) (Mycobacterium abscessus), this protein is Pantothenate kinase.